The chain runs to 64 residues: MPKMKSNKGASKRFKKTAGGIKFKHATKRHILTKRTTKNKRQLRPNSLLPKCEVAAVARMLPYA.

Belongs to the bacterial ribosomal protein bL35 family.

The protein is Large ribosomal subunit protein bL35 of Aliivibrio fischeri (strain ATCC 700601 / ES114) (Vibrio fischeri).